A 361-amino-acid chain; its full sequence is Teichoic acids export ATP-binding protein TagH (361 aa).

An ABC transporter domain is found at Thr-13–Gly-246. Gly-60–Ser-67 serves as a coordination point for ATP. The unknown stretch occupies residues Gln-247 to Lys-361.

The protein belongs to the ABC transporter superfamily. Teichoic acids exporter (TC 3.A.1.104.1) family. The complex is composed of two ATP-binding proteins (TagH) and two transmembrane proteins (TagG).

It is found in the cell membrane. The enzyme catalyses ATP + H2O + teichoic acidSide 1 = ADP + phosphate + teichoic acidSide 2.. In terms of biological role, part of the ABC transporter complex TagGH involved in teichoic acids export. Responsible for energy coupling to the transport system. The chain is Teichoic acids export ATP-binding protein TagH from Levilactobacillus brevis (strain ATCC 367 / BCRC 12310 / CIP 105137 / JCM 1170 / LMG 11437 / NCIMB 947 / NCTC 947) (Lactobacillus brevis).